Consider the following 321-residue polypeptide: Flagellin C (321 aa).

Belongs to the bacterial flagellin family.

It localises to the secreted. The protein localises to the bacterial flagellum. In terms of biological role, flagellin is the subunit protein which polymerizes to form the filaments of bacterial flagella. This Rhizobium meliloti (strain 1021) (Ensifer meliloti) protein is Flagellin C (flaC).